A 718-amino-acid polypeptide reads, in one-letter code: Serine/threonine-protein kinase PAK 5 (718 aa).

Disordered stretches follow at residues 1–29 (MFGKKKKKIEISGPSNFEHRVHTGFDPQE), 96–119 (RSNSLRKESPPTPDQGAASRIQGH), 226–245 (SPLDYSFQLTPSRTAGTSRC), 264–296 (YDRRPKSSYLHQTSPQPAMRQRSKSGSGLQEPM), and 339–371 (VFSPPLSGSDTYPRGPTKLPQSQSKVGYSSSSH). In terms of domain architecture, CRIB spans 11–24 (ISGPSNFEHRVHTG). Positions 25-447 (FDPQEQKFTG…VVSPGDPREY (423 aa)) are linker. Residue S104 is modified to Phosphoserine. T107 carries the phosphothreonine modification. The segment covering 226-244 (SPLDYSFQLTPSRTAGTSR) has biased composition (polar residues). Residues 359–371 (QSQSKVGYSSSSH) show a composition bias toward low complexity. One can recognise a Protein kinase domain in the interval 448 to 699 (LDNFIKIGEG…AQELLGHPFL (252 aa)). ATP-binding positions include 454-462 (IGEGSTGIV) and K477. D567 functions as the Proton acceptor in the catalytic mechanism.

This sequence belongs to the protein kinase superfamily. STE Ser/Thr protein kinase family. STE20 subfamily. In terms of assembly, interacts tightly with GTP-bound but not GDP-bound CDC42/p21 and RAC1. Interacts with MARK2, leading to inhibit MARK2 independently of kinase activity. Interacts with RHOD and RHOH. In terms of processing, autophosphorylated when activated by CDC42/p21.

It is found in the mitochondrion. The protein resides in the cytoplasm. It localises to the nucleus. The enzyme catalyses L-seryl-[protein] + ATP = O-phospho-L-seryl-[protein] + ADP + H(+). It catalyses the reaction L-threonyl-[protein] + ATP = O-phospho-L-threonyl-[protein] + ADP + H(+). Its function is as follows. Serine/threonine protein kinase that plays a role in a variety of different signaling pathways including cytoskeleton regulation, cell migration, proliferation or cell survival. Activation by various effectors including growth factor receptors or active CDC42 and RAC1 results in a conformational change and a subsequent autophosphorylation on several serine and/or threonine residues. Phosphorylates the proto-oncogene RAF and stimulates its kinase activity. Promotes cell survival by phosphorylating the BCL2 antagonist of cell death BAD. Phosphorylates CTNND1, probably to regulate cytoskeletal organization and cell morphology. Keeps microtubules stable through MARK2 inhibition and destabilizes the F-actin network leading to the disappearance of stress fibers and focal adhesions. The protein is Serine/threonine-protein kinase PAK 5 (Pak5) of Rattus norvegicus (Rat).